A 197-amino-acid chain; its full sequence is Non-structural protein 5 (197 aa).

Residues 16–36 form a disordered region; it reads NIFKNESSSTTSTLSGKSIGR. The residue at position 67 (S67) is a Phosphoserine; by host CK1. Position 92 (D92) interacts with Mg(2+). Positions 130 to 167 are disordered; it reads TNHKKEKSKKDKSRKHYPRIEADSDSEDYVLDDSDSDD. A compositionally biased stretch (basic residues) spans 131–146; sequence NHKKEKSKKDKSRKHY. The segment covering 152–165 has biased composition (acidic residues); that stretch reads DSDSEDYVLDDSDS. Phosphoserine; by host occurs at positions 153, 155, 163, and 165.

Belongs to the rotavirus NSP5 family. As to quaternary structure, homodimer. Interacts with VP1. Interacts with VP2. Interacts with NSP2; this interaction leads to up-regulation of NSP5 hyperphosphorylation and formation of virus factories. Interacts with NSP6. Participates in the selective exclusion of host proteins from stress granules (SG) and P bodies (PB). Also participates in the sequestration of these remodeled organelles in viral factories. The cofactor is Mg(2+). Post-translationally, O-glycosylated. Hyperphosphorylated on serine residues, when in dimeric form. Phosphorylation by host CK1 is required for the hyperphosphorylation of NSP5 dimer.

It localises to the host cytoplasm. Its function is as follows. Plays an essential role in the viral genome replication. Participates, together with NSP2, in the formation of viral factories (viroplasms), which are large inclusions in the host cytoplasm where replication intermediates are assembled and viral RNA replication takes place. Orchestrates the recruitment of viroplasmic proteins such as capsid proteins to these factories. Participates in the selective exclusion of host proteins from stress granules (SG) and P bodies (PB). Also participates in the sequestration of these remodeled organelles in viral factories. This is Non-structural protein 5 from Homo sapiens (Human).